A 515-amino-acid chain; its full sequence is Maturase K (515 aa).

Belongs to the intron maturase 2 family. MatK subfamily.

The protein localises to the plastid. The protein resides in the chloroplast. Usually encoded in the trnK tRNA gene intron. Probably assists in splicing its own and other chloroplast group II introns. The polypeptide is Maturase K (Alpinia calcarata (Snap ginger)).